The chain runs to 585 residues: A-type ATP synthase subunit A (585 aa).

A disordered region spans residues 192 to 211; that stretch reads MRQEWPVREPRPTVEKKTPR. Residues 196 to 211 are compositionally biased toward basic and acidic residues; sequence WPVREPRPTVEKKTPR. 237–244 lines the ATP pocket; it reads GPFGSGKT.

It belongs to the ATPase alpha/beta chains family. Has multiple subunits with at least A(3), B(3), C, D, E, F, H, I and proteolipid K(x).

It is found in the cell membrane. It catalyses the reaction ATP + H2O + 4 H(+)(in) = ADP + phosphate + 5 H(+)(out). Functionally, component of the A-type ATP synthase that produces ATP from ADP in the presence of a proton gradient across the membrane. The A chain is the catalytic subunit. This is A-type ATP synthase subunit A from Haloquadratum walsbyi (strain DSM 16790 / HBSQ001).